Here is a 352-residue protein sequence, read N- to C-terminus: Ion-translocating oxidoreductase complex subunit D (352 aa).

4 consecutive transmembrane segments (helical) span residues Ile20–Gly40, Gly42–Leu62, Ile89–Ala109, and Pro123–Leu143. Thr187 is subject to FMN phosphoryl threonine. The next 5 membrane-spanning stretches (helical) occupy residues Ile214–Leu234, Trp242–Phe262, Leu267–Leu287, Leu301–Pro321, and Asp322–Thr342.

Belongs to the NqrB/RnfD family. As to quaternary structure, the complex is composed of six subunits: RsxA, RsxB, RsxC, RsxD, RsxE and RsxG. Requires FMN as cofactor.

Its subcellular location is the cell inner membrane. Part of a membrane-bound complex that couples electron transfer with translocation of ions across the membrane. Required to maintain the reduced state of SoxR. This chain is Ion-translocating oxidoreductase complex subunit D, found in Escherichia coli O17:K52:H18 (strain UMN026 / ExPEC).